Consider the following 815-residue polypeptide: uncharacterized protein (815 aa).

The zn(2)-C6 fungal-type DNA-binding region spans 31–57; sequence CDMCRRKKIKCDGLRPCKNCKAGKLEC. A helical membrane pass occupies residues 560-580; the sequence is YWTTVYCGFSTIVTLIFAALL. 2 disordered regions span residues 646-668 and 769-792; these read ESNVPINNGPQQSIDKESNSNTQ and DPDVSDGKSRESSSLNNSTPFNPT. Polar residues predominate over residues 780–792; the sequence is SSSLNNSTPFNPT.

It localises to the cytoplasm. Its subcellular location is the nucleus membrane. This is an uncharacterized protein from Schizosaccharomyces pombe (strain 972 / ATCC 24843) (Fission yeast).